The sequence spans 1422 residues: YEATS domain-containing protein 2 (1422 aa).

Residue Lys-9 forms a Glycyl lysine isopeptide (Lys-Gly) (interchain with G-Cter in SUMO2) linkage. The stretch at 47-80 forms a coiled coil; sequence KEQFALEMKNKEHEIEVIDQRLIEARRMMDKLRA. A Glycyl lysine isopeptide (Lys-Gly) (interchain with G-Cter in SUMO2) cross-link involves residue Lys-113. The interval 117-198 is disordered; that stretch reads ESPSRSSSPA…KTEQRNADLT (82 aa). 3 positions are modified to phosphoserine: Ser-118, Ser-120, and Ser-157. The segment covering 119-148 has biased composition (polar residues); it reads PSRSSSPANQRAETPSANHSESDSLSQHND. Basic and acidic residues predominate over residues 149 to 165; that stretch reads FLSDKDNNSNMDIEERL. The span at 166-176 shows a compositional bias: polar residues; the sequence is SNNMEQRPSRN. The span at 177-198 shows a compositional bias: basic and acidic residues; that stretch reads TGRDTSRITGSHKTEQRNADLT. Lys-189 is covalently cross-linked (Glycyl lysine isopeptide (Lys-Gly) (interchain with G-Cter in SUMO2)). A YEATS domain is found at 200–345; the sequence is ETSRLFVKKT…EDCIYPQSSE (146 aa). Histone H3K27cr binding stretches follow at residues 259-261 and 282-284; these read HPS and WGE. Residue Lys-370 forms a Glycyl lysine isopeptide (Lys-Gly) (interchain with G-Cter in SUMO2) linkage. Thr-407 carries the phosphothreonine modification. A phosphoserine mark is found at Ser-447, Ser-463, Ser-465, Ser-471, and Ser-473. The disordered stretch occupies residues 465 to 486; it reads SPISTPSPSPLPRTPTSTPVHV. At Thr-478 the chain carries Phosphothreonine. Lys-487 participates in a covalent cross-link: Glycyl lysine isopeptide (Lys-Gly) (interchain with G-Cter in SUMO2). Over residues 513–535 the composition is skewed to polar residues; sequence TTPSTGSPTNKISTASQVSQGTG. The interval 513 to 540 is disordered; it reads TTPSTGSPTNKISTASQVSQGTGSPVPK. Ser-536 bears the Phosphoserine mark. Residue Lys-552 forms a Glycyl lysine isopeptide (Lys-Gly) (interchain with G-Cter in SUMO2) linkage. Ser-575 is subject to Phosphoserine. Lys-592 participates in a covalent cross-link: Glycyl lysine isopeptide (Lys-Gly) (interchain with G-Cter in SUMO2). The residue at position 627 (Ser-627) is a Phosphoserine. Glycyl lysine isopeptide (Lys-Gly) (interchain with G-Cter in SUMO2) cross-links involve residues Lys-649 and Lys-773. A disordered region spans residues 794-842; sequence GSAASGGSGAGGGGGGGGGGGSGSGGGGSTGGGGGTAGGGTQSTAGPGG. Gly residues predominate over residues 797-842; sequence ASGGSGAGGGGGGGGGGGSGSGGGGSTGGGGGTAGGGTQSTAGPGG. Lys-923 participates in a covalent cross-link: Glycyl lysine isopeptide (Lys-Gly) (interchain with G-Cter in SUMO2). A Glycyl lysine isopeptide (Lys-Gly) (interchain with G-Cter in SUMO1); alternate cross-link involves residue Lys-1110. A Glycyl lysine isopeptide (Lys-Gly) (interchain with G-Cter in SUMO2); alternate cross-link involves residue Lys-1110. Residue Lys-1130 forms a Glycyl lysine isopeptide (Lys-Gly) (interchain with G-Cter in SUMO2) linkage. Thr-1219 is modified (phosphothreonine). Glycyl lysine isopeptide (Lys-Gly) (interchain with G-Cter in SUMO2) cross-links involve residues Lys-1222 and Lys-1285.

In terms of assembly, component of the ADA2A-containing complex (ATAC), composed of KAT14, KAT2A, TADA2L, TADA3L, ZZ3, MBIP, WDR5, YEATS2, SGF29 and DR1.

The protein localises to the nucleus. Chromatin reader component of the ATAC complex, a complex with histone acetyltransferase activity on histones H3 and H4. YEATS2 specifically recognizes and binds histone H3 crotonylated at 'Lys-27' (H3K27cr). Crotonylation marks active promoters and enhancers and confers resistance to transcriptional repressors. This is YEATS domain-containing protein 2 from Homo sapiens (Human).